Reading from the N-terminus, the 316-residue chain is Transaldolase (316 aa).

Lysine 131 functions as the Schiff-base intermediate with substrate in the catalytic mechanism.

This sequence belongs to the transaldolase family. Type 1 subfamily. In terms of assembly, homodimer.

Its subcellular location is the cytoplasm. The enzyme catalyses D-sedoheptulose 7-phosphate + D-glyceraldehyde 3-phosphate = D-erythrose 4-phosphate + beta-D-fructose 6-phosphate. Its pathway is carbohydrate degradation; pentose phosphate pathway; D-glyceraldehyde 3-phosphate and beta-D-fructose 6-phosphate from D-ribose 5-phosphate and D-xylulose 5-phosphate (non-oxidative stage): step 2/3. Transaldolase is important for the balance of metabolites in the pentose-phosphate pathway. This is Transaldolase from Buchnera aphidicola subsp. Baizongia pistaciae (strain Bp).